The primary structure comprises 163 residues: Neurotrophin-3 (163 aa).

The N-terminal stretch at 1 to 3 (IQS) is a signal peptide. The propeptide occupies 4–119 (TSMDQGILTE…VLNRTSRRKR (116 aa)). Asparagine 112 is a glycosylation site (N-linked (GlcNAc...) asparagine).

This sequence belongs to the NGF-beta family.

It is found in the secreted. Its function is as follows. Seems to promote the survival of visceral and proprioceptive sensory neurons. The protein is Neurotrophin-3 (NTF3) of Epicrates cenchria (Rainbow boa).